The sequence spans 257 residues: Hydroxyacylglutathione hydrolase (257 aa).

7 residues coordinate Zn(2+): His-55, His-57, Asp-59, His-60, His-112, Asp-129, and His-167.

This sequence belongs to the metallo-beta-lactamase superfamily. Glyoxalase II family. In terms of assembly, monomer. Zn(2+) serves as cofactor.

It carries out the reaction an S-(2-hydroxyacyl)glutathione + H2O = a 2-hydroxy carboxylate + glutathione + H(+). Its pathway is secondary metabolite metabolism; methylglyoxal degradation; (R)-lactate from methylglyoxal: step 2/2. Its function is as follows. Thiolesterase that catalyzes the hydrolysis of S-D-lactoyl-glutathione to form glutathione and D-lactic acid. In Pseudoalteromonas translucida (strain TAC 125), this protein is Hydroxyacylglutathione hydrolase.